The chain runs to 440 residues: Ribulose bisphosphate carboxylase large chain (440 aa).

At lysine 4 the chain carries N6,N6,N6-trimethyllysine. Substrate contacts are provided by asparagine 113 and threonine 163. Lysine 165 functions as the Proton acceptor in the catalytic mechanism. Lysine 167 contacts substrate. Lysine 191, aspartate 193, and glutamate 194 together coordinate Mg(2+). Lysine 191 carries the post-translational modification N6-carboxylysine. Residue histidine 284 is the Proton acceptor of the active site. Substrate contacts are provided by arginine 285, histidine 317, and serine 369.

It belongs to the RuBisCO large chain family. Type I subfamily. In terms of assembly, heterohexadecamer of 8 large chains and 8 small chains; disulfide-linked. The disulfide link is formed within the large subunit homodimers. The cofactor is Mg(2+). The disulfide bond which can form in the large chain dimeric partners within the hexadecamer appears to be associated with oxidative stress and protein turnover.

Its subcellular location is the plastid. The protein localises to the chloroplast. The enzyme catalyses 2 (2R)-3-phosphoglycerate + 2 H(+) = D-ribulose 1,5-bisphosphate + CO2 + H2O. It catalyses the reaction D-ribulose 1,5-bisphosphate + O2 = 2-phosphoglycolate + (2R)-3-phosphoglycerate + 2 H(+). Its function is as follows. RuBisCO catalyzes two reactions: the carboxylation of D-ribulose 1,5-bisphosphate, the primary event in carbon dioxide fixation, as well as the oxidative fragmentation of the pentose substrate in the photorespiration process. Both reactions occur simultaneously and in competition at the same active site. The sequence is that of Ribulose bisphosphate carboxylase large chain from Ptychomitrium gardneri (Gardner's ptychomitrium moss).